The sequence spans 1629 residues: Ferredoxin-dependent glutamate synthase 2, chloroplastic (1629 aa).

A chloroplast-targeting transit peptide spans 1 to 107 (MALQSPGATG…LEDIISERGA (107 aa)). The active-site For GATase activity is the Cys-108. The Glutamine amidotransferase type-2 domain occupies 108-507 (CGVGFIANLE…PGMMISVDLE (400 aa)). 1186–1243 (LAETQKTLIGNGLRERVIIRVDGGFKSGVDVLIAAAMGADEYGFGTLAMIATGCIMAR) is an FMN binding site. Residues Cys-1239, Cys-1245, and Cys-1250 each coordinate [3Fe-4S] cluster. A disordered region spans residues 1599-1629 (SEEDTPEANSDHILKTTTGDEEQVSSTLAEK).

It belongs to the glutamate synthase family. [3Fe-4S] cluster serves as cofactor. Requires FAD as cofactor. It depends on FMN as a cofactor. As to expression, expressed predominantly in roots and slightly in leaves. Low expression in the leaf mesophyll and phloem companion cell-sieve element complex.

It localises to the plastid. The protein resides in the chloroplast stroma. It catalyses the reaction 2 oxidized [2Fe-2S]-[ferredoxin] + 2 L-glutamate = L-glutamine + 2 reduced [2Fe-2S]-[ferredoxin] + 2-oxoglutarate + 2 H(+). It participates in amino-acid biosynthesis; L-glutamate biosynthesis via GLT pathway; L-glutamate from 2-oxoglutarate and L-glutamine (ferredoxin route): step 1/1. The protein operates within energy metabolism; nitrogen metabolism. In terms of biological role, may play a role in primary nitrogen assimilation in roots. Could supply a constitutive level of glutamate to maintain a basal level of protein synthesis. The sequence is that of Ferredoxin-dependent glutamate synthase 2, chloroplastic (GLU2) from Arabidopsis thaliana (Mouse-ear cress).